The following is a 394-amino-acid chain: Phosphoglycerate kinase (394 aa).

Substrate is bound by residues 21–23 (DFN), Arg36, 59–62 (HMGR), Arg118, and Arg151. Residues Lys202, Glu324, and 350–353 (GGDS) contribute to the ATP site.

This sequence belongs to the phosphoglycerate kinase family. In terms of assembly, monomer.

The protein resides in the cytoplasm. The enzyme catalyses (2R)-3-phosphoglycerate + ATP = (2R)-3-phospho-glyceroyl phosphate + ADP. The protein operates within carbohydrate degradation; glycolysis; pyruvate from D-glyceraldehyde 3-phosphate: step 2/5. This Exiguobacterium sibiricum (strain DSM 17290 / CCUG 55495 / CIP 109462 / JCM 13490 / 255-15) protein is Phosphoglycerate kinase.